The chain runs to 357 residues: DNA integrity scanning protein DisA (357 aa).

In terms of domain architecture, DAC spans P8–D148. Positions 76, 94, 107, 111, and 128 each coordinate 3',3'-c-di-AMP.

Belongs to the DisA family. As to quaternary structure, homooctamer. Mg(2+) serves as cofactor.

The catalysed reaction is 2 ATP = 3',3'-c-di-AMP + 2 diphosphate. Its activity is regulated as follows. Inhibited by 3'-dATP. Participates in a DNA-damage check-point. DisA forms globular foci that rapidly scan along the chromosomes searching for lesions. In terms of biological role, has diadenylate cyclase activity, catalyzing the condensation of 2 ATP molecules into cyclic di-AMP (c-di-AMP). c-di-AMP likely acts as a signaling molecule that may couple DNA integrity with a cellular process. This rate-limiting step is the accessibility of the active site; mutating the possible exit tunnel (residues 128-130) increases product 2-fold despite Arg-130 being important for ATP-binding. Does not convert GTP to c-di-GMP. This is DNA integrity scanning protein DisA from Thermotoga maritima (strain ATCC 43589 / DSM 3109 / JCM 10099 / NBRC 100826 / MSB8).